The sequence spans 122 residues: MGEMLERQKKRLPSKAKYLKYTASITETGNHEADSSVIFRPHHSDVTCSNARRAESRTLPQICSCILLDHGRRTRPEVRTGMVSLHGSFKGFPCFGIRRGISHVLPGQKLRGSCDNWKKRQN.

This is an uncharacterized protein from Saccharomyces cerevisiae (strain ATCC 204508 / S288c) (Baker's yeast).